The primary structure comprises 358 residues: Cholesterol galactosyltransferase (358 aa).

The protein belongs to the glycosyltransferase 2 family.

The enzyme catalyses cholesterol + UDP-alpha-D-galactose = cholesteryl 3-beta-D-galactoside + UDP + H(+). It participates in glycolipid biosynthesis. Functionally, galactosyltransferase involved in the synthesis of cholesterol glycolipids, which are formed by the use of host-derived cholesterol and have been shown to be immunogenic, and possibly contribute to Lyme disease pathogenesis. Catalyzes the formation of cholesteryl beta-D-galactopyranoside (CGal) from cholesterol and UDP-alpha-D-galactose. Cannot use GDP-mannose. The polypeptide is Cholesterol galactosyltransferase (Borreliella burgdorferi (strain ATCC 35210 / DSM 4680 / CIP 102532 / B31) (Borrelia burgdorferi)).